Here is a 105-residue protein sequence, read N- to C-terminus: Met repressor (105 aa).

It belongs to the MetJ family. Homodimer.

Its subcellular location is the cytoplasm. In terms of biological role, this regulatory protein, when combined with SAM (S-adenosylmethionine) represses the expression of the methionine regulon and of enzymes involved in SAM synthesis. The protein is Met repressor of Sodalis glossinidius (strain morsitans).